Consider the following 256-residue polypeptide: Myeloblastin (256 aa).

An N-terminal signal peptide occupies residues 1-25; the sequence is MAHRPPSPALASVLLALLLSGAARA. A propeptide spanning residues 26-27 is cleaved from the precursor; it reads AE. One can recognise a Peptidase S1 domain in the interval 28–248; that stretch reads IVGGHEAQPH…YVDWIRSTLR (221 aa). A disulfide bridge connects residues cysteine 56 and cysteine 72. Active-site charge relay system residues include histidine 71 and aspartate 118. Asparagine 129 and asparagine 174 each carry an N-linked (GlcNAc...) asparagine glycan. Cystine bridges form between cysteine 152–cysteine 209, cysteine 182–cysteine 188, and cysteine 199–cysteine 224. The active-site Charge relay system is serine 203. Positions 249–256 are excised as a propeptide; that stretch reads RVEAKGRP.

This sequence belongs to the peptidase S1 family. Elastase subfamily. In terms of assembly, may form dimers. Interacts with CD177; the interaction tethers PRTN3 to the cell surface; the interaction is direct. Interacts with SERPINB1. Interacts with ADGRG3. Expressed in polymorphonuclear leukocytes (at protein level). Expressed in neutrophils (at protein level). Expressed in differentiating neutrophils.

Its subcellular location is the cytoplasmic granule. It is found in the secreted. It localises to the cell membrane. The protein resides in the membrane raft. The catalysed reaction is Hydrolysis of proteins, including elastin, by preferential cleavage: -Ala-|-Xaa- &gt; -Val-|-Xaa-.. Its activity is regulated as follows. Inhibited by phenylmethanesulfonyl fluoride (PMSF) and diisopropyl fluorophosphate (DFP). In terms of biological role, serine protease that degrades elastin, fibronectin, laminin, vitronectin, and collagen types I, III, and IV (in vitro). By cleaving and activating receptor F2RL1/PAR-2, enhances endothelial cell barrier function and thus vascular integrity during neutrophil transendothelial migration. Plays a role in neutrophil transendothelial migration, probably when associated with CD177. Triggers inflammatory processes in neutrophils by interacting with ADGRG3 upstream of F2RL1/PAR2 activation. The chain is Myeloblastin (PRTN3) from Homo sapiens (Human).